The primary structure comprises 397 residues: Acetate kinase (397 aa).

Asparagine 8 lines the Mg(2+) pocket. ATP is bound at residue lysine 15. Substrate is bound at residue arginine 89. The active-site Proton donor/acceptor is aspartate 146. Residues 206 to 210 (HVGNG), 283 to 285 (DMR), and 331 to 335 (GMGEN) contribute to the ATP site. Glutamate 383 is a binding site for Mg(2+).

The protein belongs to the acetokinase family. As to quaternary structure, homodimer. Requires Mg(2+) as cofactor. Mn(2+) serves as cofactor.

The protein resides in the cytoplasm. The catalysed reaction is acetate + ATP = acetyl phosphate + ADP. Its pathway is metabolic intermediate biosynthesis; acetyl-CoA biosynthesis; acetyl-CoA from acetate: step 1/2. In terms of biological role, catalyzes the formation of acetyl phosphate from acetate and ATP. Can also catalyze the reverse reaction. This Streptococcus agalactiae serotype Ia (strain ATCC 27591 / A909 / CDC SS700) protein is Acetate kinase.